Consider the following 543-residue polypeptide: Mitochondrial distribution and morphology protein 34 (543 aa).

Positions 1–202 (MSFNVNWNSL…LPTLLHKVSL (202 aa)) constitute an SMP-LTD domain. The disordered stretch occupies residues 519–543 (AFSHNDPSITPFELPPPPYHQLSRA).

This sequence belongs to the MDM34 family. Component of the ER-mitochondria encounter structure (ERMES) or MDM complex, composed of MMM1, MDM10, MDM12 and MDM34.

It is found in the mitochondrion outer membrane. In terms of biological role, component of the ERMES/MDM complex, which serves as a molecular tether to connect the endoplasmic reticulum (ER) and mitochondria. Components of this complex are involved in the control of mitochondrial shape and protein biogenesis, and function in nonvesicular lipid trafficking between the ER and mitochondria. MDM34 is required for the interaction of the ER-resident membrane protein MMM1 and the outer mitochondrial membrane-resident beta-barrel protein MDM10. In Clavispora lusitaniae (strain ATCC 42720) (Yeast), this protein is Mitochondrial distribution and morphology protein 34.